A 441-amino-acid polypeptide reads, in one-letter code: Probable D-serine dehydratase (441 aa).

Lys-101 is modified (N6-(pyridoxal phosphate)lysine).

The protein belongs to the serine/threonine dehydratase family. DsdA subfamily. It depends on pyridoxal 5'-phosphate as a cofactor.

The enzyme catalyses D-serine = pyruvate + NH4(+). In Geobacillus kaustophilus (strain HTA426), this protein is Probable D-serine dehydratase.